The chain runs to 351 residues: MTILSDVKALGQQIWLDNLSRSLVQSGELAQMLKQGVCGVTSNPAIFQKAFAGDALYADEVAALKRQNLSPKQRYETMAVADVRAACDVCLAEHESTGGKTGFVSLEVSPELAKDAQGTVEEARRLHAAIARKNAMIKVPATDAGIDALETLVSDGISVNLTLLFSRAQTLKAYAAYARGIAKRLAAGQSVAHIQVVASFFISRVDSALDATLPDRLKGKTAIALAKAAYQDWEQYFTAPEFAALEAQGANRVQLLWASTGVKNPAYPDTLYVDSLIGVHTVNTVPDATLKAFIDHGTAKATLTESADEARARLAEIAALGIDVETLAARLQEDGLKQFEEAFEKLLAPLV.

The active-site Schiff-base intermediate with substrate is K138.

It belongs to the transaldolase family. Type 2 subfamily.

The protein resides in the cytoplasm. The enzyme catalyses D-sedoheptulose 7-phosphate + D-glyceraldehyde 3-phosphate = D-erythrose 4-phosphate + beta-D-fructose 6-phosphate. The protein operates within carbohydrate degradation; pentose phosphate pathway; D-glyceraldehyde 3-phosphate and beta-D-fructose 6-phosphate from D-ribose 5-phosphate and D-xylulose 5-phosphate (non-oxidative stage): step 2/3. Its function is as follows. Transaldolase is important for the balance of metabolites in the pentose-phosphate pathway. This is Transaldolase from Neisseria gonorrhoeae (strain ATCC 700825 / FA 1090).